A 261-amino-acid polypeptide reads, in one-letter code: Acetylglutamate kinase (261 aa).

Residues 41–42 (GG), R63, and N157 each bind substrate.

It belongs to the acetylglutamate kinase family. ArgB subfamily.

The protein localises to the cytoplasm. It carries out the reaction N-acetyl-L-glutamate + ATP = N-acetyl-L-glutamyl 5-phosphate + ADP. Its pathway is amino-acid biosynthesis; L-arginine biosynthesis; N(2)-acetyl-L-ornithine from L-glutamate: step 2/4. Its function is as follows. Catalyzes the ATP-dependent phosphorylation of N-acetyl-L-glutamate. The polypeptide is Acetylglutamate kinase (Koribacter versatilis (strain Ellin345)).